The primary structure comprises 25 residues: Cytochrome c oxidase subunit 1 (25 aa).

The protein belongs to the heme-copper respiratory oxidase family. Cu(2+) serves as cofactor. It depends on heme as a cofactor.

Its subcellular location is the cell inner membrane. The enzyme catalyses 4 Fe(II)-[cytochrome c] + O2 + 8 H(+)(in) = 4 Fe(III)-[cytochrome c] + 2 H2O + 4 H(+)(out). It participates in energy metabolism; oxidative phosphorylation. Subunit I and II form the functional core of the enzyme complex. Electrons originating in cytochrome c are transferred via heme a and Cu(A) to the binuclear center formed by heme a3 and Cu(B). This cytochrome c oxidase shows proton pump activity across the membrane in addition to the electron transfer. This chain is Cytochrome c oxidase subunit 1 (ctaD), found in Paracoccus versutus (Thiobacillus versutus).